The primary structure comprises 463 residues: Exodeoxyribonuclease 7 large subunit (463 aa).

The protein belongs to the XseA family. As to quaternary structure, heterooligomer composed of large and small subunits.

It is found in the cytoplasm. It carries out the reaction Exonucleolytic cleavage in either 5'- to 3'- or 3'- to 5'-direction to yield nucleoside 5'-phosphates.. In terms of biological role, bidirectionally degrades single-stranded DNA into large acid-insoluble oligonucleotides, which are then degraded further into small acid-soluble oligonucleotides. In Pseudomonas syringae pv. syringae (strain B728a), this protein is Exodeoxyribonuclease 7 large subunit.